The following is a 1431-amino-acid chain: Probable ATP-dependent RNA helicase spindle-E (1431 aa).

The region spanning 127 to 294 (LAAIRENPVV…FAMSSSLPPV (168 aa)) is the Helicase ATP-binding domain. 140–147 (GETGCGKT) contributes to the ATP binding site. A DEAH box motif is present at residues 240-243 (DEVH). One can recognise a Helicase C-terminal domain in the interval 354-526 (QSQQSYEEAK…NSVLKAKELE (173 aa)). A Tudor domain is found at 937–1000 (AKAVTKGLQL…RLMSPQLKRD (64 aa)).

It belongs to the DEAD box helicase family. DEAH subfamily.

It localises to the cytoplasm. It catalyses the reaction ATP + H2O = ADP + phosphate + H(+). Probable ATP-binding RNA helicase which plays a central role during spermatogenesis and oogenesis by repressing transposable elements and preventing their mobilization, which is essential for the germline integrity. Acts via the piRNA metabolic process, which mediates the repression of transposable elements during meiosis by forming complexes composed of piRNAs and Piwi and govern the methylation and subsequent repression of transposons. Involved in the repression of LTR retrotransposon copia. Also involved in telomere regulation by repressing specialized telomeric retroelements HeT-A, TAHRE, and TART; Drosophila telomeres being maintained by transposition of specialized telomeric retroelements. Involved in telomeric trans-silencing, a repression mechanism by which a transposon or a transgene inserted in subtelomeric heterochromatin has the capacity to repress in trans in the female germline, a homologous transposon, or transgene located in euchromatin. Involved in the repression of testis-expressed Stellate genes by the homologous Su(Ste) repeats. Required for anteroposterior and dorsoventral axis formation during oogenesis. The polypeptide is Probable ATP-dependent RNA helicase spindle-E (spn-E) (Drosophila mojavensis (Fruit fly)).